A 91-amino-acid polypeptide reads, in one-letter code: UPF0250 protein Psyr_4360 (91 aa).

It belongs to the UPF0250 family.

The polypeptide is UPF0250 protein Psyr_4360 (Pseudomonas syringae pv. syringae (strain B728a)).